We begin with the raw amino-acid sequence, 252 residues long: Isoprenyl transferase (252 aa).

Aspartate 32 is an active-site residue. Aspartate 32 provides a ligand contact to Mg(2+). Residues 33 to 36 (GNGR), tryptophan 37, arginine 45, histidine 49, and 77 to 79 (STE) each bind substrate. Residue asparagine 80 is the Proton acceptor of the active site. Substrate-binding positions include tryptophan 81, arginine 83, arginine 200, and 206–208 (RLS). Glutamate 219 contributes to the Mg(2+) binding site.

This sequence belongs to the UPP synthase family. As to quaternary structure, homodimer. Mg(2+) serves as cofactor.

Functionally, catalyzes the condensation of isopentenyl diphosphate (IPP) with allylic pyrophosphates generating different type of terpenoids. In Listeria monocytogenes serovar 1/2a (strain ATCC BAA-679 / EGD-e), this protein is Isoprenyl transferase.